Reading from the N-terminus, the 426-residue chain is 3-phosphoshikimate 1-carboxyvinyltransferase (426 aa).

K22, S23, and R27 together coordinate 3-phosphoshikimate. K22 provides a ligand contact to phosphoenolpyruvate. Phosphoenolpyruvate is bound by residues G96 and R124. The 3-phosphoshikimate site is built by S170, S171, Q172, S198, D314, N337, and K341. Q172 provides a ligand contact to phosphoenolpyruvate. D314 acts as the Proton acceptor in catalysis. Positions 345, 387, and 412 each coordinate phosphoenolpyruvate.

The protein belongs to the EPSP synthase family. Monomer.

The protein resides in the cytoplasm. The catalysed reaction is 3-phosphoshikimate + phosphoenolpyruvate = 5-O-(1-carboxyvinyl)-3-phosphoshikimate + phosphate. Its pathway is metabolic intermediate biosynthesis; chorismate biosynthesis; chorismate from D-erythrose 4-phosphate and phosphoenolpyruvate: step 6/7. Its function is as follows. Catalyzes the transfer of the enolpyruvyl moiety of phosphoenolpyruvate (PEP) to the 5-hydroxyl of shikimate-3-phosphate (S3P) to produce enolpyruvyl shikimate-3-phosphate and inorganic phosphate. The polypeptide is 3-phosphoshikimate 1-carboxyvinyltransferase (Shewanella sp. (strain W3-18-1)).